A 24-amino-acid chain; its full sequence is L-amino-acid oxidase (24 aa).

It belongs to the flavin monoamine oxidase family. FIG1 subfamily. As to quaternary structure, homodimer; non-covalently linked. Requires FAD as cofactor. Post-translationally, N-glycosylated. Expressed by the venom gland.

The protein localises to the secreted. It carries out the reaction an L-alpha-amino acid + O2 + H2O = a 2-oxocarboxylate + H2O2 + NH4(+). Catalyzes an oxidative deamination of predominantly hydrophobic and aromatic L-amino acids, thus producing hydrogen peroxide that may contribute to the diverse toxic effects of this enzyme. Exhibits diverse biological activities, such as hemorrhage, hemolysis, edema, apoptosis, and antiparasitic activities. This protein has antibacterial activity (against E.coli, S.aureus, and B.dysenteriae), cytotoxic activity, as well as an ability to induce platelet aggregation. Effects of snake L-amino oxidases on platelets are controversial, since they either induce aggregation or inhibit agonist-induced aggregation. These different effects are probably due to different experimental conditions. This Protobothrops mucrosquamatus (Taiwan habu) protein is L-amino-acid oxidase.